Reading from the N-terminus, the 460-residue chain is tRNA(Ile)-lysidine synthase (460 aa).

Residue 37–42 participates in ATP binding; that stretch reads SGGADS.

The protein belongs to the tRNA(Ile)-lysidine synthase family.

It is found in the cytoplasm. The catalysed reaction is cytidine(34) in tRNA(Ile2) + L-lysine + ATP = lysidine(34) in tRNA(Ile2) + AMP + diphosphate + H(+). Functionally, ligates lysine onto the cytidine present at position 34 of the AUA codon-specific tRNA(Ile) that contains the anticodon CAU, in an ATP-dependent manner. Cytidine is converted to lysidine, thus changing the amino acid specificity of the tRNA from methionine to isoleucine. This Treponema denticola (strain ATCC 35405 / DSM 14222 / CIP 103919 / JCM 8153 / KCTC 15104) protein is tRNA(Ile)-lysidine synthase.